The following is an 84-amino-acid chain: Omega-conotoxin-like ArMKLT1-02 (84 aa).

Positions 1–22 (MKVTCMMIVAVLFLTAWTFVTA) are cleaved as a signal peptide. A propeptide spanning residues 23-51 (DDSISALEDLFAKAHDKMENSEASPLNER) is cleaved from the precursor. 3 disulfide bridges follow: cysteine 53–cysteine 71, cysteine 60–cysteine 75, and cysteine 70–cysteine 79.

This sequence belongs to the conotoxin O1 superfamily. As to expression, expressed by the venom duct.

The protein localises to the secreted. Its function is as follows. Omega-conotoxins act at presynaptic membranes, they bind and block voltage-gated calcium channels (Cav). This is Omega-conotoxin-like ArMKLT1-02 from Conus arenatus (Sand-dusted cone).